We begin with the raw amino-acid sequence, 1129 residues long: Ubiquitin carboxyl-terminal hydrolase 15 (1129 aa).

The segment at 1 to 26 (MVLSNVDAEEVNMDSSMELEESSQEP) is disordered. Residues 7 to 23 (DAEEVNMDSSMELEESS) are compositionally biased toward acidic residues. The 154-residue stretch at 51 to 204 (HASYSWVVKN…NDEICISVTV (154 aa)) folds into the MATH domain. Residues 230 to 545 (VGLKNQGATC…NAYMLVYFRK (316 aa)) enclose the USP domain. The active-site Nucleophile is cysteine 239. The active-site Proton acceptor is histidine 481.

Belongs to the peptidase C19 family.

It localises to the nucleus. The catalysed reaction is Thiol-dependent hydrolysis of ester, thioester, amide, peptide and isopeptide bonds formed by the C-terminal Gly of ubiquitin (a 76-residue protein attached to proteins as an intracellular targeting signal).. In terms of biological role, hydrolase that deubiquitinates target proteins. Cleaves the UBL propeptide in sde2. Involved in regulating the steady-state levels of proteins including prp4. The protein is Ubiquitin carboxyl-terminal hydrolase 15 of Schizosaccharomyces pombe (strain 972 / ATCC 24843) (Fission yeast).